The sequence spans 475 residues: Chromosomal replication initiator protein DnaA (475 aa).

The segment at 1-73 (MSDTEQERWS…LSCWQAELPD (73 aa)) is domain I, interacts with DnaA modulators. Residues 73–131 (DVHRIDLTVRSAMRCAAPVREAPATDARHPERSEGRNGVELKTVATAPASANHDALGGS) form a domain II region. The segment at 132–354 (PLDPRLTFQS…GAINRLLAHS (223 aa)) is domain III, AAA+ region. Residues Gly-179, Gly-181, Lys-182, and Thr-183 each contribute to the ATP site. A domain IV, binds dsDNA region spans residues 355–475 (KLNAQPVTLE…VELLKRQLQE (121 aa)).

Belongs to the DnaA family. As to quaternary structure, oligomerizes as a right-handed, spiral filament on DNA at oriC.

It localises to the cytoplasm. Functionally, plays an essential role in the initiation and regulation of chromosomal replication. ATP-DnaA binds to the origin of replication (oriC) to initiate formation of the DNA replication initiation complex once per cell cycle. Binds the DnaA box (a 9 base pair repeat at the origin) and separates the double-stranded (ds)DNA. Forms a right-handed helical filament on oriC DNA; dsDNA binds to the exterior of the filament while single-stranded (ss)DNA is stabiized in the filament's interior. The ATP-DnaA-oriC complex binds and stabilizes one strand of the AT-rich DNA unwinding element (DUE), permitting loading of DNA polymerase. After initiation quickly degrades to an ADP-DnaA complex that is not apt for DNA replication. Binds acidic phospholipids. The polypeptide is Chromosomal replication initiator protein DnaA (Nitrobacter winogradskyi (strain ATCC 25391 / DSM 10237 / CIP 104748 / NCIMB 11846 / Nb-255)).